The sequence spans 172 residues: Adenine phosphoribosyltransferase (172 aa).

It belongs to the purine/pyrimidine phosphoribosyltransferase family. In terms of assembly, homodimer.

It localises to the cytoplasm. The catalysed reaction is AMP + diphosphate = 5-phospho-alpha-D-ribose 1-diphosphate + adenine. It participates in purine metabolism; AMP biosynthesis via salvage pathway; AMP from adenine: step 1/1. Its function is as follows. Catalyzes a salvage reaction resulting in the formation of AMP, that is energically less costly than de novo synthesis. This is Adenine phosphoribosyltransferase from Anaeromyxobacter dehalogenans (strain 2CP-1 / ATCC BAA-258).